The chain runs to 146 residues: Small ribosomal subunit protein uS5 (146 aa).

Positions 8 to 71 (FSEVVVNIGR…DDAFKNIIKV (64 aa)) constitute an S5 DRBM domain.

It belongs to the universal ribosomal protein uS5 family. In terms of assembly, part of the 30S ribosomal subunit. Contacts proteins S4 and S8.

Its function is as follows. With S4 and S12 plays an important role in translational accuracy. Functionally, located at the back of the 30S subunit body where it stabilizes the conformation of the head with respect to the body. This is Small ribosomal subunit protein uS5 from Helicobacter hepaticus (strain ATCC 51449 / 3B1).